We begin with the raw amino-acid sequence, 287 residues long: uncharacterized protein (287 aa).

Basic and acidic residues predominate over residues 1–17 (MRWQGRRESDNVEDRRN). Positions 1 to 29 (MRWQGRRESDNVEDRRNSSGGPSMGGPGF) are disordered. Residues 38 to 60 (LILLIVVLVAGYYGVDLTGLMTG) traverse the membrane as a helical segment.

It is found in the membrane. This is an uncharacterized protein from Escherichia coli O6:H1 (strain CFT073 / ATCC 700928 / UPEC).